We begin with the raw amino-acid sequence, 311 residues long: Vomeronasal type-1 receptor 105 (311 aa).

At 1–17 (MMNKNSRLYTDSNIRNT) the chain is on the extracellular side. A helical membrane pass occupies residues 18-38 (FFAEIGIGVSANSLLLLFNIF). The Cytoplasmic portion of the chain corresponds to 39–50 (KLICGQRSRLTD). A helical transmembrane segment spans residues 51 to 71 (LPIGLLSLINLLMLLMTAFIA). Residues 72 to 94 (TDTFISWRGWDDIICKSLLYLYR) lie on the Extracellular side of the membrane. Cys-86 and Cys-173 are disulfide-bonded. Residues 95–115 (TFRGLSLCTSCLLSVLQAIIL) traverse the membrane as a helical segment. Over 116-135 (SPRSSCLAKFKHKPSHHISC) the chain is Cytoplasmic. A helical transmembrane segment spans residues 136-156 (AILSLSVLYMFISSHLLVSII). Topologically, residues 157 to 188 (ATPNLTTNDFIHVTQWCSILPMSYLMQSMFST) are extracellular. N-linked (GlcNAc...) asparagine glycosylation is present at Asn-160. A helical transmembrane segment spans residues 189-209 (LLAIRDVFLISLMVLSTWYMV). Residues 210-239 (ALLCRHRKQTRHLQGTSLSPKASPEQRATR) are Cytoplasmic-facing. The chain crosses the membrane as a helical span at residues 240–260 (SILMLMSLFVLMSVFDSIVCS). Topologically, residues 261 to 271 (SRTMYLNDPIS) are extracellular. Residues 272-292 (YSYQLFMVHIYATVSPFVFIV) form a helical membrane-spanning segment. Residues 293–311 (TEKHIVNSLRSMCVKVMNV) lie on the Cytoplasmic side of the membrane.

This sequence belongs to the G-protein coupled receptor 1 family. Expressed in 1-4% of neurons of the vomeronasal organ. Only one pheromone receptor gene may be expressed in a particular neuron. Not expressed in the main olfactory epithelium.

The protein localises to the cell membrane. Putative pheromone receptor implicated in the regulation of social as well as reproductive behavior. In Rattus norvegicus (Rat), this protein is Vomeronasal type-1 receptor 105 (Vom1r105).